Here is a 708-residue protein sequence, read N- to C-terminus: G-box-binding factor (708 aa).

Disordered stretches follow at residues 1–29 (MLST…GSDL) and 123–339 (QQAQ…QTIP). Low complexity-rich tracts occupy residues 11–21 (SSSSSSSSSPS), 123–219 (QQAQ…QHHQ), and 227–316 (SQPQ…SPST). The segment covering 324–333 (ETSNSEKKDS) has biased composition (basic and acidic residues). 2 consecutive repeat copies span residues 339–368 (PKCT…AFTP) and 481–510 (PPCP…PFTP). A disordered region spans residues 511–604 (VGAGLSPSSS…PTYSPNPSLP (94 aa)). Low complexity predominate over residues 516–590 (SPSSSPSSPK…SSISQSPLQL (75 aa)). Residues 591–600 (NYQTPTYSPN) are compositionally biased toward polar residues.

The protein resides in the nucleus. Its function is as follows. cAMP-responsive transcriptional activator regulating late gene expression. Essential component of the developmental switch between early and late development. Binds to a number of CA/GT-rich gene regulatory elements. This Dictyostelium discoideum (Social amoeba) protein is G-box-binding factor (gbfA).